The sequence spans 396 residues: F-box protein pof13 (396 aa).

The F-box domain maps to lysine 40 to asparagine 89.

Part of a SCF (SKP1-cullin-F-box) protein ligase complex. Interacts with skp1.

The protein resides in the cytoplasm. It functions in the pathway protein modification; protein ubiquitination. The sequence is that of F-box protein pof13 (pof13) from Schizosaccharomyces pombe (strain 972 / ATCC 24843) (Fission yeast).